The sequence spans 200 residues: Snake venom metalloproteinase hemorrhagic factor 2 (200 aa).

A Peptidase M12B domain is found at 4–200 (KYIELVVVAD…RKPQCILNKP (197 aa)). Residue glutamate 7 participates in Ca(2+) binding. Asparagine 70 carries N-linked (GlcNAc...) asparagine glycosylation. Residue aspartate 91 coordinates Ca(2+). Disulfide bonds link cysteine 115/cysteine 195, cysteine 155/cysteine 179, and cysteine 157/cysteine 162. Zn(2+) is bound at residue histidine 140. Residue glutamate 141 is part of the active site. Residues histidine 144 and histidine 150 each contribute to the Zn(2+) site. Residues cysteine 195 and asparagine 198 each coordinate Ca(2+).

Belongs to the venom metalloproteinase (M12B) family. P-I subfamily. Monomer. Zn(2+) serves as cofactor. Expressed by the venom gland.

It localises to the secreted. In terms of biological role, snake venom zinc metalloproteinase that induces weak hemorrhage and mild myonecrosis. Shows mild myotoxicity by killing myocytes. Also induces edema in the mouse footpad at doses where hemorrhage is absent. In vitro, degrades laminin, fibronectin, and type IV collagen, suggesting this toxin play a role in local tissue damage by degrading extracellular matrix, and possibly by degrading muscle extracellular matrix. Hemorrhage is not due to cytotoxicity towards endothelial cells in culture, and may only play a minor role in local bleeding characteristic of L.muta envenomations. Also induces the synthesis of several endogenous matrix metalloproteinases, which in turn, may participate in extracellular matrix degradation. This is Snake venom metalloproteinase hemorrhagic factor 2 from Lachesis muta muta (Bushmaster).